We begin with the raw amino-acid sequence, 2789 residues long: MALGGALALALALALAVLGPLSLRVLAGDCKGQRQVLREAPGFVTDGAGNYSVNGNCEWLIEAPSPQHRILLDFLFLDTECTYDYLFVYDGDSPQGPLLASLSGSTRPPPIEASSGKMLLHLFSDANYNLLGFNASFRFSLCPGGCQNHGQCKSPGVCVCEPGWGGPDCGLQECSAYCGSHGTCASTLGPCRCEPGFLGRACDLHLWENQGAGWWHSVSAGDPAFSARIGAAGAFLSPPGLLAVFGGQDLNKALGDLVLYNFSTNTWESWDLTPAPAARHSHVAVAWAGLLVLMGGELANGLLTNDVWAFSPLGGGHWELLAPPASSSSGPPGLAGHAAALVDDIWLYVSGGRTQHDLFSSGLFRFRLDHTSRGYWEQVIPAGGRPPAATGHSMVFHAPSRTLLVHGGHRPSTARFSVRVNSTELFHVERRVWTTLKGRDGLQGPRERAFHTASVLGNYMVVYGGNVHTHYQEEKCYEDGIFFYHLGCHQWVSGAELAPPGTPEGRAAPPSGRYSHVAAVLGGSVLLVAGGYSGRPRGDLMAYKVPPFVFQAPALDYHLDYCSMYTDHSVCSRDPECSWCQGACQAAPPPGTPSGACPAASCLGLGRLLSDCQACLAFSSPTAPPRGPGALGWCVHNESCLPRPEQARCRGEQISGTVGWWGPAPVFVTSLEACVTQSFLPGLHLLTFQQPPNASQPDKVSIVRSTTITLTPSPETDVSLVYRGFIHPLLPGGPGGPGAEDVAVWARAQRLHVLARMARGPDTENMEEVGRWVAQQEKETRRLQRPGSDRLFPLPGRGNKYAVEIRGQLNGSAGPGHSELTLLWDRTGVPGGSEISFFFLEPYRSSACTSYSSCLGCLADQGCGWCLNSATCHLRQGRAHCEDDGSGESLLVLVPALCPLCEEHRDCHACTQDPFCEWHQSTNRKGDAACSRRGRGRGALKNPEECPPLCSQRLTCEDCLANSSQCAWCQSTHTCFLFAAYLARYPHGGCRGWDDSVHSEPRCRSCGGFLTCHECLQSHECGWCGNEDNPTLGRCLQGDFSGPLGGGNCSLWVGEGLGLPVALPARWAYARCPDVDECRLGLARCHPRATCLNTPLSYECHCQRGYQGDGITHCNRTCLEDCGHGVCSGPPDFTCVCDLGWTSDLPPPTPAPGPPAPRCSRDCGCSFHSHCRRRGPGYCDECQDWTWGEHCERCRPGSFGNATGSGGCRPCQCNGHGDPRRGHCDNLTGLCFCQDHTEGAHCQICSPGYYGDPRAGGSCFRECGGRALLTNVSSVALGSRRFGGLLPPGGGAARAGPGLSYCVWVVSATEALQPCVPGTLCPPLTLTFSPDSSTPCTLSYVLAFDGFPRFLDTGVVQSDRSLIAAFCGQRRDRPLTVQALSGLLVLHWEANGSSSWGFNASVGSARCGSGGPGSCPVPQECVPQDGAAGAGLCRCPQGWAGPHCRMALCPENCNAHTGAGICNQSLGVCICAEGFGGPDCATKLDGGQLVWETLMDSRLSADTASRFLHRLGHTMVEGPDATLWMFGGLGLPQGLLGNLYRYSVSERRWTQMLAGAEDGGPGPSPRSFHAAAYVPAGRGAMYLLGGLTAGGVTRDFWVLNLTTLQWRQEKPPQNMELPAVAGHTLTARRGLSLLLVGGYSPENGFNQQLLEYQLATGTWVSGAQSGTPPTGLYGHSAVYHEATDSLYVFGGFRFHVELAAPSPELYSLHCPDRTWSLLAPSQGAKPRPRLFHASALLGDTMVVLGGRSDPDEFSSDVLLYQVNCNTWLLPALTRPAFVGSPMEESVAHAVAAVGSRLYISGGFGGVALGRLLALTLPPDPCRLLPSPEACNQSGACTWCHGACLSGDQAHRLGCGVPPCSPMPRSPEECRRLRTCSECLARHPRTLQPGDGEASIPRCKWCTNCPEGACIGRNGSCTSENDCRINQREVFWAGNCSEAACGAADCEQCTREGKCMWTRQFKRTGETRRILSVQPTYDWTCFSHSLLNVSPMPVESSPPLPCPTPCHLLPNCTSCLASKGADGGWQHCVWSSSLQQCLSPSYLPLRCMAGGCGRLLRGPESCSLGCAQATQCALCLRRPHCGWCAWGGQDGGGHCMEGGLSGPRDGLTCGRPGASWAFLSCPPEDECANGHHDCNETQNCHDQPHGYECSCKTGYTMDNVTGVCRPVCAQGCVNGSCVEPDHCRCHFGFVGRNCSTECRCNRHSECAGVGAQDHCLLCRNHTKGSHCEQCLPLFVGSALGGGTCRPCHAFCRGNSHVCVSRKELEMARKEPEKYSLDPEEIETWVAEGPSEDEAVCVNCQNNSYGDRCESCLHGYFLLDGKCTKCQCNGHADTCNEQDGTGCPCQNNTETGTCQGSSPSDRRDCYKYQCAKCRESFHGSPLGGQQCYRLISVEQECCLDPTSQTNCFHEPKRRALGPGRTVLFGVQPKFTNVDIRLTLDVTFGAVDLYVSTSYDTFVVRVAPDTGVHTVHIQPPPPPPPPPPPADGVPRVAADLGGLGTGSGSGSPVEPRVREVWPRGLITYVTVTEPSAVLVVRSVRDRLVITYPHEHHALKSSRFYLLLLGVGDPNGPGANGSADSQGLLFFRQDQAHIDLFVFFSVFFSCFFLFLSLCVLLWKAKQALDQRQEQRRHLQEMTKMASRPFAKVTVCFPPDPAGPAPAWKPAGLPPPAFRRSEPFLAPLLLTGAGGPWGPMGGGCCPPALPATTAGLRAGPITLEPTEDGMAGVATLLLQLPGGPHAPNGACLGSALVTLRHRLHEYCGGSGGAGGSGHGGGGGRKGLLSQDNLTSMSL.

The N-terminal stretch at 1 to 27 (MALGGALALALALALAVLGPLSLRVLA) is a signal peptide. The Extracellular portion of the chain corresponds to 28–2591 (GDCKGQRQVL…FFRQDQAHID (2564 aa)). 6 disulfides stabilise this stretch: C30–C57, C142–C152, C146–C158, C174–C184, C178–C191, and C193–C202. The region spanning 30-140 (CKGQRQVLRE…LGFNASFRFS (111 aa)) is the CUB 1 domain. N50 is a glycosylation site (N-linked (GlcNAc...) asparagine). EGF-like domains lie at 138 to 168 (RFSL…GGPD) and 170 to 203 (GLQE…RACD). Kelch repeat units lie at residues 241–287 (LLAV…AVAW), 290–338 (LLVL…AGHA), 346–399 (WLYV…FHAP), 402–453 (TLLV…FHTA), 459–511 (YMVV…APPS), and 525–575 (VLLV…SRDP). PSI domains follow at residues 561–613 (YCSM…SDCQ), 847–899 (ACTS…ALCP), and 900–947 (LCEE…EECP). Residue N1048 is glycosylated (N-linked (GlcNAc...) asparagine). The EGF-like 3; calcium-binding domain occupies 1074–1115 (DVDECRLGLARCHPRATCLNTPLSYECHCQRGYQGDGITHCN). 16 disulfides stabilise this stretch: C1078/C1091, C1085/C1100, C1102/C1114, C1163/C1171, C1165/C1179, C1182/C1191, C1194/C1208, C1211/C1224, C1213/C1231, C1233/C1242, C1245/C1259, C1263/C1302, C1336/C1367, C1407/C1421, C1415/C1433, and C1435/C1444. 2 Laminin EGF-like domains span residues 1163-1210 (CGCS…GCRP) and 1211-1261 (CQCN…SCFR). The N-linked (GlcNAc...) asparagine glycan is linked to N1226. In terms of domain architecture, CUB 2 spans 1263-1405 (CGGRALLTNV…WGFNASVGSA (143 aa)). N1271 is a glycosylation site (N-linked (GlcNAc...) asparagine). Phosphothreonine is present on T1353. Positions 1403–1445 (GSARCGSGGPGSCPVPQECVPQDGAAGAGLCRCPQGWAGPHCR) constitute an EGF-like 4 domain. Kelch repeat units lie at residues 1522–1570 (TLWM…SFHA), 1580–1629 (AMYL…TARR), 1632–1679 (SLLL…SAVY), 1685–1735 (SLYV…HASA), 1740–1787 (TMVV…ESVA), and 1796–1841 (RLYI…WCHG). 4 PSI domains span residues 1820-1860 (PCRL…PPCS), 1868-1923 (ECRR…NDCR), 2004-2062 (PCHL…ESCS), and 2064-2121 (GCAQ…LSCP). N2010 carries N-linked (GlcNAc...) asparagine glycosylation. The 39-residue stretch at 2122–2160 (PEDECANGHHDCNETQNCHDQPHGYECSCKTGYTMDNVT) folds into the EGF-like 5 domain. 2 cysteine pairs are disulfide-bonded: C2126–C2139 and C2133–C2148. N-linked (GlcNAc...) asparagine glycans are attached at residues N2158 and N2173. Cystine bridges form between C2197–C2205, C2199–C2214, C2217–C2226, C2229–C2243, C2324–C2333, C2326–C2341, C2343–C2368, and C2371–C2385. 2 consecutive Laminin EGF-like domains span residues 2197 to 2245 (CRCN…TCRP) and 2324 to 2387 (CQCN…QCYR). Residues 2468–2508 (VHIQPPPPPPPPPPPADGVPRVAADLGGLGTGSGSGSPVEP) are disordered. A compositionally biased stretch (pro residues) spans 2471 to 2484 (QPPPPPPPPPPPAD). A helical membrane pass occupies residues 2592 to 2612 (LFVFFSVFFSCFFLFLSLCVL). Over 2613 to 2789 (LWKAKQALDQ…SQDNLTSMSL (177 aa)) the chain is Cytoplasmic. Residues 2762 to 2776 (GGAGGSGHGGGGGRK) are compositionally biased toward gly residues. Residues 2762–2789 (GGAGGSGHGGGGGRKGLLSQDNLTSMSL) form a disordered region. A compositionally biased stretch (polar residues) spans 2780 to 2789 (SQDNLTSMSL).

In terms of tissue distribution, highest expression in brain, testis and kidney.

The protein resides in the membrane. In terms of biological role, acts as a negative regulator of hedgehog signaling. The sequence is that of Multiple epidermal growth factor-like domains protein 8 (Megf8) from Mus musculus (Mouse).